Here is a 100-residue protein sequence, read N- to C-terminus: uncharacterized protein (100 aa).

Residues 42–84 are disordered; it reads PGEPWRTAGGIGEGGAGGDGAAAGGEGDVHGRPAGAEDGEDGA. Positions 50–67 are enriched in gly residues; sequence GGIGEGGAGGDGAAAGGE.

This is an uncharacterized protein from Torque teno tamarin virus (isolate So-TTV2).